Consider the following 416-residue polypeptide: Trifolitoxin-processing protein TfxD (416 aa).

11 helical membrane-spanning segments follow: residues 24–44 (MIPNVADTIVVTLIGATALQV), 48–68 (VLITILTLNIAFLNFCSLICM), 79–99 (VFAAIVRAACMMIGVYLALIA), 114–134 (IAFIALSALRPFVAGWNAYCA), 153–173 (SSLIYAGVNLLFVGLSHFAGT), 176–196 (SIISLLIGVYLALFHNALAYA), 230–250 (ASFINMLEMGFLALVGWVVAA), 255–275 (IAVFYFPFFTLVELTSGLAIG), 295–315 (VLIAVYSTYSLLCFLIYVGLI), 322–342 (IFALPLSLAGLALLFLICDGL), and 372–392 (VILALAAVLGSVQALAIALVL).

It localises to the cell membrane. In terms of biological role, the actions of the proteins TfxB, TfxD and TfxF are implicated in the processing of the inactive trifolitoxin (TfxA) precursor into the active peptide. The chain is Trifolitoxin-processing protein TfxD (tfxD) from Rhizobium leguminosarum bv. trifolii.